The sequence spans 561 residues: Arginine--tRNA ligase (561 aa).

Positions 128-138 match the 'HIGH' region motif; it reads ANPTGPLHVGH.

The protein belongs to the class-I aminoacyl-tRNA synthetase family. In terms of assembly, monomer.

The protein resides in the cytoplasm. It carries out the reaction tRNA(Arg) + L-arginine + ATP = L-arginyl-tRNA(Arg) + AMP + diphosphate. The chain is Arginine--tRNA ligase from Methylibium petroleiphilum (strain ATCC BAA-1232 / LMG 22953 / PM1).